Consider the following 195-residue polypeptide: Thymidine kinase (195 aa).

ATP-binding positions include 15-22, Glu-23, 57-58, and 88-91; these read GPMYSGKS, SH, and DEVQ. The active-site Proton acceptor is Glu-89. Phe-120 contacts substrate. Zn(2+) contacts are provided by Cys-145 and Cys-148. Position 179 (Tyr-179) interacts with substrate. Residues Cys-183 and Cys-186 each coordinate Zn(2+).

Belongs to the thymidine kinase family.

It localises to the cytoplasm. It catalyses the reaction thymidine + ATP = dTMP + ADP + H(+). The chain is Thymidine kinase from Clostridium acetobutylicum (strain ATCC 824 / DSM 792 / JCM 1419 / IAM 19013 / LMG 5710 / NBRC 13948 / NRRL B-527 / VKM B-1787 / 2291 / W).